Consider the following 830-residue polypeptide: Serine/threonine-protein kinase atg1 (830 aa).

Positions 14–307 (YVIRSEIGRG…YDGFFSSIVV (294 aa)) constitute a Protein kinase domain. ATP-binding positions include 20–28 (IGRGSFAIV) and lysine 43. The active-site Proton acceptor is the aspartate 157. Serine 346 carries the phosphoserine modification. Residues 448–468 (TQLSNESLTHEQSINGNSPSP) show a composition bias toward polar residues. The tract at residues 448–480 (TQLSNESLTHEQSINGNSPSPNEGVFQGSFSPE) is disordered.

Belongs to the protein kinase superfamily. Ser/Thr protein kinase family. APG1/unc-51/ULK1 subfamily. In terms of assembly, homodimer. Component of the atg1 kinase complex composed of at least atg1, atg13, atg17 and atg101. Interacts directly with atg13. In terms of processing, phosphorylated. Dephosphorylated under depletion of nitrogen.

The enzyme catalyses L-seryl-[protein] + ATP = O-phospho-L-seryl-[protein] + ADP + H(+). It catalyses the reaction L-threonyl-[protein] + ATP = O-phospho-L-threonyl-[protein] + ADP + H(+). Functionally, serine/threonine protein kinase involved in the cytoplasm to vacuole transport (Cvt) and found to be essential in autophagy, where it is required for the formation of autophagosomes. Involved in the clearance of protein aggregates which cannot be efficiently cleared by the proteasome. Required for selective autophagic degradation of the nucleus (nucleophagy) as well as for mitophagy which contributes to regulate mitochondrial quantity and quality by eliminating the mitochondria to a basal level to fulfill cellular energy requirements and preventing excess ROS production. Also involved in endoplasmic reticulum-specific autophagic process, in selective removal of ER-associated degradation (ERAD) substrates. Plays a key role in ATG9 and ATG23 cycling through the pre-autophagosomal structure and is necessary to promote ATG18 binding to ATG9 through phosphorylation of ATG9. Catalyzes phosphorylation of ATG4, decreasing the interaction between ATG4 and ATG8 and impairing deconjugation of PE-conjugated forms of ATG8. Autophagy functions to supply nitrogen and is activated when cells cannot access exogenous nitrogen, thus ensuring that they can adapt and subsequently propagate. Finally, atg13 is also required for glycogen storage during stationary phase and has a role in meiosis and sporulation. The polypeptide is Serine/threonine-protein kinase atg1 (Schizosaccharomyces pombe (strain 972 / ATCC 24843) (Fission yeast)).